A 127-amino-acid polypeptide reads, in one-letter code: Large-conductance mechanosensitive channel (127 aa).

Transmembrane regions (helical) follow at residues 9-29 (EFAM…GVAF), 32-52 (IVTA…LGGI), and 75-95 (VIDF…INLL).

Belongs to the MscL family. As to quaternary structure, homopentamer.

Its subcellular location is the cell inner membrane. Channel that opens in response to stretch forces in the membrane lipid bilayer. May participate in the regulation of osmotic pressure changes within the cell. The sequence is that of Large-conductance mechanosensitive channel from Legionella pneumophila subsp. pneumophila (strain Philadelphia 1 / ATCC 33152 / DSM 7513).